A 465-amino-acid polypeptide reads, in one-letter code: MNIGKIVQIMGAVVDVEFASEALPEIYSAVKVTVPEQKIDLTLEVAQHLGNNTVRCVAMSSTDGLQRGMAALNTGAPITVPVGPATLGRIFNVLGKAIDNGEEVHTDTSYPIHRPAPAFVDQDPSTVMLETGIKVIDLLAPYSKGGKIGLFGGAGVGKTVLIQELINNIAMEHGGLSVFAGVGERTREGNDLWNEMRESGVIDKMAMVFGQMNEPPGARLRVGLTGLTMAEYFRDVQNQDVLLFIDNIFRFTQAGSEVSALLGRMPSAVGYQPTLATEMGALQERITSTRNGSITSVQAIYVPADDLTDPAPATAFAHLDATTVLNRAISEKGIYPAVDPLDSNSRILSPQIIGEEHYKVARDVQQILQKYKELQDIIAILGMDELSEDEKLVVSRARRIERFLSQPFHVAEVFTGSPGKYVPIKETIRGFKEIVEGKHDNLPEAAFHMVGTIEEAIEKAKALGA.

152–159 (GGAGVGKT) serves as a coordination point for ATP.

Belongs to the ATPase alpha/beta chains family. As to quaternary structure, F-type ATPases have 2 components, CF(1) - the catalytic core - and CF(0) - the membrane proton channel. CF(1) has five subunits: alpha(3), beta(3), gamma(1), delta(1), epsilon(1). CF(0) has three main subunits: a(1), b(2) and c(9-12). The alpha and beta chains form an alternating ring which encloses part of the gamma chain. CF(1) is attached to CF(0) by a central stalk formed by the gamma and epsilon chains, while a peripheral stalk is formed by the delta and b chains.

Its subcellular location is the cell membrane. The enzyme catalyses ATP + H2O + 4 H(+)(in) = ADP + phosphate + 5 H(+)(out). In terms of biological role, produces ATP from ADP in the presence of a proton gradient across the membrane. The catalytic sites are hosted primarily by the beta subunits. This is ATP synthase subunit beta from Desulfitobacterium hafniense (strain Y51).